The sequence spans 78 residues: Translation initiation factor IF-1, chloroplastic (78 aa).

One can recognise an S1-like domain in the interval Met-1 to Arg-73.

This sequence belongs to the IF-1 family. Component of the 30S ribosomal translation pre-initiation complex which assembles on the 30S ribosome in the order IF-2 and IF-3, IF-1 and N-formylmethionyl-tRNA(fMet); mRNA recruitment can occur at any time during PIC assembly.

The protein resides in the plastid. It is found in the chloroplast. Its function is as follows. One of the essential components for the initiation of protein synthesis. Stabilizes the binding of IF-2 and IF-3 on the 30S subunit to which N-formylmethionyl-tRNA(fMet) subsequently binds. Helps modulate mRNA selection, yielding the 30S pre-initiation complex (PIC). Upon addition of the 50S ribosomal subunit IF-1, IF-2 and IF-3 are released leaving the mature 70S translation initiation complex. In Ostreococcus tauri, this protein is Translation initiation factor IF-1, chloroplastic.